Consider the following 142-residue polypeptide: MLKKDKSELTDIEYIVTQENGTEPPFMNEYWNHFAKGIYVDKISGKPLFTSEEKFHSECGWPSFSKALDDDEIIELVDKSFGMLRTEVRSEESNSHLGHVFNDGPKESGGLRYCINSAAIQFIPYEKLEELGYGDLISHFDK.

Residues L2–Y125 form the MsrB domain. Catalysis depends on C114, which acts as the Nucleophile.

This sequence belongs to the MsrB Met sulfoxide reductase family.

The catalysed reaction is L-methionyl-[protein] + [thioredoxin]-disulfide + H2O = L-methionyl-(R)-S-oxide-[protein] + [thioredoxin]-dithiol. The sequence is that of Peptide methionine sulfoxide reductase MsrB from Staphylococcus aureus (strain USA300).